The chain runs to 566 residues: E3 ubiquitin-protein ligase RNF220 (566 aa).

Residue Lys-277 forms a Glycyl lysine isopeptide (Lys-Gly) (interchain with G-Cter in SUMO2) linkage. The segment at 277 to 297 (KREGESPTASPHSSATDDLHH) is disordered. Ser-390 bears the Phosphoserine mark. Positions 485-513 (EDSAVTTFEALKARVRELERQLSRGDRYK) form a coiled coil. Residues 514 to 522 (CLICMDSYS) are required for targeting to the cytoplasm. The RING-type zinc finger occupies 514 to 553 (CLICMDSYSMPLTSIQCWHVHCEECWLRTLGAKKLCPQCN).

As to quaternary structure, interacts with SIN3B. Interacts with CTNNB1 (via Armadillo repeats 2-8). Interacts with USP7 (via MATH domain). Auto-ubiquitinated; leads to proteasomal degradation. As to expression, ubiquitously expressed. Abundant in brain and spinal cord, particularly in the cerebellum and cerebral cortex. In fetal tissues expressed in the cerebellum, spinal cord and cortex.

It localises to the cytoplasm. Its subcellular location is the nucleus. It carries out the reaction S-ubiquitinyl-[E2 ubiquitin-conjugating enzyme]-L-cysteine + [acceptor protein]-L-lysine = [E2 ubiquitin-conjugating enzyme]-L-cysteine + N(6)-ubiquitinyl-[acceptor protein]-L-lysine.. It participates in protein modification; protein ubiquitination. E3 ubiquitin-protein ligase that promotes the ubiquitination and proteasomal degradation of SIN3B. Independently of its E3 ligase activity, acts as a CTNNB1 stabilizer through USP7-mediated deubiquitination of CTNNB1 promoting Wnt signaling. Plays a critical role in the regulation of nuclear lamina. This chain is E3 ubiquitin-protein ligase RNF220 (RNF220), found in Homo sapiens (Human).